A 247-amino-acid polypeptide reads, in one-letter code: Carboxy-S-adenosyl-L-methionine synthase (247 aa).

S-adenosyl-L-methionine is bound by residues tyrosine 40, 65–67 (GSS), 90–91 (DN), 122–123 (DI), asparagine 137, and arginine 204.

Belongs to the class I-like SAM-binding methyltransferase superfamily. Cx-SAM synthase family. Homodimer.

It catalyses the reaction prephenate + S-adenosyl-L-methionine = carboxy-S-adenosyl-L-methionine + 3-phenylpyruvate + H2O. Its function is as follows. Catalyzes the conversion of S-adenosyl-L-methionine (SAM) to carboxy-S-adenosyl-L-methionine (Cx-SAM). The chain is Carboxy-S-adenosyl-L-methionine synthase from Pseudomonas syringae pv. syringae (strain B728a).